The chain runs to 1061 residues: RecBCD enzyme subunit RecC (1061 aa).

Belongs to the RecC family. As to quaternary structure, heterotrimer of RecB, RecC and RecD. All subunits contribute to DNA-binding.

A helicase/nuclease that prepares dsDNA breaks (DSB) for recombinational DNA repair. Binds to DSBs and unwinds DNA via a highly rapid and processive ATP-dependent bidirectional helicase activity. Unwinds dsDNA until it encounters a Chi (crossover hotspot instigator) sequence from the 3' direction. Cuts ssDNA a few nucleotides 3' to the Chi site. The properties and activities of the enzyme are changed at Chi. The Chi-altered holoenzyme produces a long 3'-ssDNA overhang and facilitates RecA-binding to the ssDNA for homologous DNA recombination and repair. Holoenzyme degrades any linearized DNA that is unable to undergo homologous recombination. In the holoenzyme this subunit recognizes the wild-type Chi sequence, and when added to isolated RecB increases its ATP-dependent helicase processivity. In Buchnera aphidicola subsp. Schizaphis graminum (strain Sg), this protein is RecBCD enzyme subunit RecC.